The chain runs to 453 residues: Bifunctional protein GlmU (453 aa).

Residues 1-225 (MNIVILAAGT…EWETLGVNSK (225 aa)) are pyrophosphorylase. UDP-N-acetyl-alpha-D-glucosamine-binding positions include 6–9 (LAAG), Lys-20, Gln-71, 76–77 (GT), 98–100 (YGD), Gly-135, Glu-150, Asn-165, and Asn-223. Asp-100 lines the Mg(2+) pocket. Asn-223 contributes to the Mg(2+) binding site. The segment at 226-246 (AQLAELERIHQRNVADALLAD) is linker. The tract at residues 247 to 453 (GVTLADPARI…GYVRPVKKKS (207 aa)) is N-acetyltransferase. UDP-N-acetyl-alpha-D-glucosamine-binding residues include Arg-329 and Lys-347. His-359 serves as the catalytic Proton acceptor. Positions 362 and 373 each coordinate UDP-N-acetyl-alpha-D-glucosamine. Residues Ala-376, 382 to 383 (NY), Ser-401, and Ala-419 contribute to the acetyl-CoA site.

It in the N-terminal section; belongs to the N-acetylglucosamine-1-phosphate uridyltransferase family. This sequence in the C-terminal section; belongs to the transferase hexapeptide repeat family. In terms of assembly, homotrimer. Requires Mg(2+) as cofactor.

The protein localises to the cytoplasm. The enzyme catalyses alpha-D-glucosamine 1-phosphate + acetyl-CoA = N-acetyl-alpha-D-glucosamine 1-phosphate + CoA + H(+). It carries out the reaction N-acetyl-alpha-D-glucosamine 1-phosphate + UTP + H(+) = UDP-N-acetyl-alpha-D-glucosamine + diphosphate. The protein operates within nucleotide-sugar biosynthesis; UDP-N-acetyl-alpha-D-glucosamine biosynthesis; N-acetyl-alpha-D-glucosamine 1-phosphate from alpha-D-glucosamine 6-phosphate (route II): step 2/2. It participates in nucleotide-sugar biosynthesis; UDP-N-acetyl-alpha-D-glucosamine biosynthesis; UDP-N-acetyl-alpha-D-glucosamine from N-acetyl-alpha-D-glucosamine 1-phosphate: step 1/1. It functions in the pathway bacterial outer membrane biogenesis; LPS lipid A biosynthesis. Functionally, catalyzes the last two sequential reactions in the de novo biosynthetic pathway for UDP-N-acetylglucosamine (UDP-GlcNAc). The C-terminal domain catalyzes the transfer of acetyl group from acetyl coenzyme A to glucosamine-1-phosphate (GlcN-1-P) to produce N-acetylglucosamine-1-phosphate (GlcNAc-1-P), which is converted into UDP-GlcNAc by the transfer of uridine 5-monophosphate (from uridine 5-triphosphate), a reaction catalyzed by the N-terminal domain. The polypeptide is Bifunctional protein GlmU (Burkholderia multivorans (strain ATCC 17616 / 249)).